The sequence spans 320 residues: Transaldolase (320 aa).

The active-site Schiff-base intermediate with substrate is Lys126.

Belongs to the transaldolase family. Type 1 subfamily. Homodimer.

The protein resides in the cytoplasm. It carries out the reaction D-sedoheptulose 7-phosphate + D-glyceraldehyde 3-phosphate = D-erythrose 4-phosphate + beta-D-fructose 6-phosphate. It participates in carbohydrate degradation; pentose phosphate pathway; D-glyceraldehyde 3-phosphate and beta-D-fructose 6-phosphate from D-ribose 5-phosphate and D-xylulose 5-phosphate (non-oxidative stage): step 2/3. Its function is as follows. Transaldolase is important for the balance of metabolites in the pentose-phosphate pathway. This is Transaldolase from Bordetella pertussis (strain Tohama I / ATCC BAA-589 / NCTC 13251).